A 241-amino-acid chain; its full sequence is Probable FKBP-type peptidyl-prolyl cis-trans isomerase (241 aa).

In terms of domain architecture, PPIase FKBP-type spans 150–241; it reads TDTVKVHYTG…VLDVNPKSEK (92 aa).

Belongs to the FKBP-type PPIase family.

The catalysed reaction is [protein]-peptidylproline (omega=180) = [protein]-peptidylproline (omega=0). Functionally, PPIases accelerate the folding of proteins. It catalyzes the cis-trans isomerization of proline imidic peptide bonds in oligopeptides. This Haemophilus influenzae (strain ATCC 51907 / DSM 11121 / KW20 / Rd) protein is Probable FKBP-type peptidyl-prolyl cis-trans isomerase.